Here is a 111-residue protein sequence, read N- to C-terminus: Cell cycle protein GpsB (111 aa).

Residues Leu-32 to Ser-63 adopt a coiled-coil conformation. Positions Gln-59 to Glu-80 are disordered. Over residues Ala-60–Glu-71 the composition is skewed to polar residues.

This sequence belongs to the GpsB family. Forms polymers through the coiled coil domains. Interacts with PBP1, MreC and EzrA.

Its subcellular location is the cytoplasm. In terms of biological role, divisome component that associates with the complex late in its assembly, after the Z-ring is formed, and is dependent on DivIC and PBP2B for its recruitment to the divisome. Together with EzrA, is a key component of the system that regulates PBP1 localization during cell cycle progression. Its main role could be the removal of PBP1 from the cell pole after pole maturation is completed. Also contributes to the recruitment of PBP1 to the division complex. Not essential for septum formation. The polypeptide is Cell cycle protein GpsB (Streptococcus suis (strain 98HAH33)).